Reading from the N-terminus, the 143-residue chain is Large ribosomal subunit protein uL11 (143 aa).

Belongs to the universal ribosomal protein uL11 family. Part of the ribosomal stalk of the 50S ribosomal subunit. Interacts with L10 and the large rRNA to form the base of the stalk. L10 forms an elongated spine to which L12 dimers bind in a sequential fashion forming a multimeric L10(L12)X complex. In terms of processing, one or more lysine residues are methylated.

Forms part of the ribosomal stalk which helps the ribosome interact with GTP-bound translation factors. This Paraburkholderia phymatum (strain DSM 17167 / CIP 108236 / LMG 21445 / STM815) (Burkholderia phymatum) protein is Large ribosomal subunit protein uL11.